Consider the following 61-residue polypeptide: Potassium channel toxin alpha-KTx 5.3 (61 aa).

A signal peptide spans 1-28 (MHNYYKIVLIMVAFFAVIITFSNIQVEG). 3 cysteine pairs are disulfide-bonded: cysteine 31–cysteine 49, cysteine 36–cysteine 54, and cysteine 40–cysteine 56. The interval 34 to 37 (KRCQ) is [R/K]XCQ motif. Histidine 59 carries the post-translational modification Histidine amide.

The protein belongs to the short scorpion toxin superfamily. Potassium channel inhibitor family. Alpha-KTx 05 subfamily. Expressed by the venom gland.

It is found in the secreted. In terms of biological role, blocks small conductance calcium-activated potassium channels (KCNN, SK). Has also been shown to weakly inhibit Kv11.1/KCNH2/ERG1, Kv1.2/KCNA2, Kv1.3/KCNA3 and Kv2.1/KCNB1 voltage-gated potassium channels. This is Potassium channel toxin alpha-KTx 5.3 from Olivierus martensii (Manchurian scorpion).